Consider the following 357-residue polypeptide: Peptide chain release factor 1 (357 aa).

Residue Gln236 is modified to N5-methylglutamine.

This sequence belongs to the prokaryotic/mitochondrial release factor family. Post-translationally, methylated by PrmC. Methylation increases the termination efficiency of RF1.

Its subcellular location is the cytoplasm. In terms of biological role, peptide chain release factor 1 directs the termination of translation in response to the peptide chain termination codons UAG and UAA. The polypeptide is Peptide chain release factor 1 (Mycolicibacterium paratuberculosis (strain ATCC BAA-968 / K-10) (Mycobacterium paratuberculosis)).